A 173-amino-acid chain; its full sequence is Calcium-binding protein 5 (173 aa).

4 consecutive EF-hand domains span residues 28 to 63 (DEIEELREAFLEFDKDRDGFISCKDLGNLMRTMGYM), 82 to 99 (GRVDFDDFVELMTPKLLA), 105 to 140 (IGVQEMRDAFKEFDTNGDGEITLVELQQAMQRLLGE), and 142 to 173 (LTPREISEVVREADVNGDGTVDFEEFVKMMSR). The Ca(2+) site is built by D41, D43, D45, and D52. 10 residues coordinate Ca(2+): D118, N120, D122, E124, E129, D155, N157, D159, T161, and E166.

As to quaternary structure, interacts with CACNA1C (via C-terminal CDB motif) in a calcium-dependent manner. Interacts with STXBP1. Interacts with MYO6. In terms of tissue distribution, retina.

The protein resides in the cytoplasm. Its function is as follows. Inhibits calcium-dependent inactivation of L-type calcium channel and shifts voltage dependence of activation to more depolarized membrane potentials. Involved in the transmission of light signals. May positively regulate neurotransmitter vesicle endocytosis and exocytosis in a salt-dependent manner. May play a role in the extension and network organization of neurites. This Homo sapiens (Human) protein is Calcium-binding protein 5 (CABP5).